Here is a 157-residue protein sequence, read N- to C-terminus: 2-C-methyl-D-erythritol 2,4-cyclodiphosphate synthase (157 aa).

A divalent metal cation is bound by residues D8 and H10. Residues 8–10 and 34–35 each bind 4-CDP-2-C-methyl-D-erythritol 2-phosphate; these read DVH and HS. H42 is an a divalent metal cation binding site. Residues 56–58, 132–135, and R142 contribute to the 4-CDP-2-C-methyl-D-erythritol 2-phosphate site; these read DIG and TTNE.

It belongs to the IspF family. In terms of assembly, homotrimer. A divalent metal cation is required as a cofactor.

The catalysed reaction is 4-CDP-2-C-methyl-D-erythritol 2-phosphate = 2-C-methyl-D-erythritol 2,4-cyclic diphosphate + CMP. It participates in isoprenoid biosynthesis; isopentenyl diphosphate biosynthesis via DXP pathway; isopentenyl diphosphate from 1-deoxy-D-xylulose 5-phosphate: step 4/6. Involved in the biosynthesis of isopentenyl diphosphate (IPP) and dimethylallyl diphosphate (DMAPP), two major building blocks of isoprenoid compounds. Catalyzes the conversion of 4-diphosphocytidyl-2-C-methyl-D-erythritol 2-phosphate (CDP-ME2P) to 2-C-methyl-D-erythritol 2,4-cyclodiphosphate (ME-CPP) with a corresponding release of cytidine 5-monophosphate (CMP). This chain is 2-C-methyl-D-erythritol 2,4-cyclodiphosphate synthase, found in Chlorobium phaeovibrioides (strain DSM 265 / 1930) (Prosthecochloris vibrioformis (strain DSM 265)).